The following is a 90-amino-acid chain: Small ribosomal subunit protein uS17 (90 aa).

This sequence belongs to the universal ribosomal protein uS17 family. In terms of assembly, part of the 30S ribosomal subunit.

In terms of biological role, one of the primary rRNA binding proteins, it binds specifically to the 5'-end of 16S ribosomal RNA. In Treponema denticola (strain ATCC 35405 / DSM 14222 / CIP 103919 / JCM 8153 / KCTC 15104), this protein is Small ribosomal subunit protein uS17.